The chain runs to 191 residues: Photosystem I assembly protein Ycf4 (191 aa).

A run of 2 helical transmembrane segments spans residues 33–53 (LLAV…LSSY) and 74–94 (LVMG…WAMI).

The protein belongs to the Ycf4 family.

The protein resides in the cellular thylakoid membrane. Seems to be required for the assembly of the photosystem I complex. In Prochlorococcus marinus (strain MIT 9303), this protein is Photosystem I assembly protein Ycf4.